Here is a 535-residue protein sequence, read N- to C-terminus: Estrogen receptor (535 aa).

The tract at residues 1–21 (SRMLTDPPRIGSMQSLGSSPT) is disordered. The segment at 1-104 (SRMLTDPPRI…VFEMANETRY (104 aa)) is modulating. Over residues 12 to 21 (SMQSLGSSPT) the composition is skewed to polar residues. 2 NR C4-type zinc fingers span residues 105-125 (CAVC…CEGC) and 141-165 (CPAT…LRKC). Positions 105–170 (CAVCSDFASG…RLRKCYEVGM (66 aa)) form a DNA-binding region, nuclear receptor. A hinge region spans residues 171-236 (VKGGLRKDRG…GGWCGPRITM (66 aa)). Residues 187–229 (DKRYCGPAGDREKPYGDLEHRTAPPQDGGRNSSSSSLSGGGGW) form a disordered region. The span at 195–208 (GDREKPYGDLEHRT) shows a compositional bias: basic and acidic residues. Over residues 214–223 (GGRNSSSSSL) the composition is skewed to low complexity. Residues 237–473 (PPEQVLFLLQ…DLLLEMLDGH (237 aa)) enclose the NR LBD domain. The tract at residues 478-535 (PGKVAQAGEQTEGPSTTTTTSTGSSIGPMRGSQDTHIRSPGSGVLQYGSPSSDQMPIP) is disordered. Residues 492–502 (STTTTTSTGSS) are compositionally biased toward low complexity. Residues 525–535 (GSPSSDQMPIP) are compositionally biased toward polar residues.

It belongs to the nuclear hormone receptor family. NR3 subfamily. Binds DNA as a homodimer. Can form a heterodimer with ER-beta. In terms of tissue distribution, highest expression in brain and liver.

It localises to the nucleus. In terms of biological role, the steroid hormones and their receptors are involved in the regulation of eukaryotic gene expression and affect cellular proliferation and differentiation in target tissues. In Salmo salar (Atlantic salmon), this protein is Estrogen receptor (esr1).